A 458-amino-acid chain; its full sequence is ATP synthase subunit beta (458 aa).

148–155 (GGAGVGKT) is a binding site for ATP.

It belongs to the ATPase alpha/beta chains family. F-type ATPases have 2 components, CF(1) - the catalytic core - and CF(0) - the membrane proton channel. CF(1) has five subunits: alpha(3), beta(3), gamma(1), delta(1), epsilon(1). CF(0) has three main subunits: a(1), b(2) and c(9-12). The alpha and beta chains form an alternating ring which encloses part of the gamma chain. CF(1) is attached to CF(0) by a central stalk formed by the gamma and epsilon chains, while a peripheral stalk is formed by the delta and b chains.

The protein resides in the cell inner membrane. The catalysed reaction is ATP + H2O + 4 H(+)(in) = ADP + phosphate + 5 H(+)(out). In terms of biological role, produces ATP from ADP in the presence of a proton gradient across the membrane. The catalytic sites are hosted primarily by the beta subunits. The chain is ATP synthase subunit beta from Pseudomonas putida (strain GB-1).